The following is a 570-amino-acid chain: Sulfite reductase [NADPH] hemoprotein beta-component (570 aa).

[4Fe-4S] cluster contacts are provided by C434, C440, C479, and C483. C483 is a binding site for siroheme.

This sequence belongs to the nitrite and sulfite reductase 4Fe-4S domain family. As to quaternary structure, alpha(8)-beta(8). The alpha component is a flavoprotein, the beta component is a hemoprotein. The cofactor is siroheme. [4Fe-4S] cluster is required as a cofactor.

The enzyme catalyses hydrogen sulfide + 3 NADP(+) + 3 H2O = sulfite + 3 NADPH + 4 H(+). Its pathway is sulfur metabolism; hydrogen sulfide biosynthesis; hydrogen sulfide from sulfite (NADPH route): step 1/1. Component of the sulfite reductase complex that catalyzes the 6-electron reduction of sulfite to sulfide. This is one of several activities required for the biosynthesis of L-cysteine from sulfate. The polypeptide is Sulfite reductase [NADPH] hemoprotein beta-component (Escherichia coli (strain SMS-3-5 / SECEC)).